Consider the following 151-residue polypeptide: Myosin light polypeptide 6 (151 aa).

An N-acetylcysteine modification is found at cysteine 2. The EF-hand 1 domain occupies 7–42 (DQTAEFKEAFQLFDRTGDGKILYSQCGDVMRALGQN). Phosphoserine is present on serine 57. Lysine 81 is modified (N6-acetyllysine). EF-hand domains follow at residues 84–119 (GTYE…LGEK) and 119–151 (KMTE…VLNG).

In terms of assembly, myosin is a hexamer of 2 heavy chains and 4 light chains. Interacts with SPATA6.

Regulatory light chain of myosin. Does not bind calcium. This is Myosin light polypeptide 6 (Myl6) from Rattus norvegicus (Rat).